Here is a 229-residue protein sequence, read N- to C-terminus: Protein GLC8 (229 aa).

Disordered regions lie at residues 1–21 (MGGI…QQDP), 35–62 (TQKN…EIIG), and 107–229 (QFQD…TKEP). The residue at position 12 (serine 12) is a Phosphoserine. Positions 107–117 (QFQDIHIDEPK) are enriched in basic and acidic residues. Position 118 is a phosphothreonine; by PHO85 (threonine 118). Residue serine 158 is modified to Phosphoserine. A compositionally biased stretch (basic and acidic residues) spans 164–173 (FEIKENKQPD). Residues 175 to 184 (ETNDENDEDS) are compositionally biased toward acidic residues. A Phosphoserine modification is found at serine 184. Residues 185 to 196 (PEARHKKFEEMR) show a composition bias toward basic and acidic residues.

Post-translationally, phosphorylated by the cyclin-CDKs PCL6-PHO85 and PCL7-PHO85. Phosphorylation of Thr-118 inactivates GLC8.

Functionally, modulator of GLC7 type-1 protein phosphatase. The polypeptide is Protein GLC8 (GLC8) (Saccharomyces cerevisiae (strain ATCC 204508 / S288c) (Baker's yeast)).